Here is a 369-residue protein sequence, read N- to C-terminus: Peptide chain release factor 1 (369 aa).

Gln234 is modified (N5-methylglutamine).

Belongs to the prokaryotic/mitochondrial release factor family. Methylated by PrmC. Methylation increases the termination efficiency of RF1.

It is found in the cytoplasm. Functionally, peptide chain release factor 1 directs the termination of translation in response to the peptide chain termination codons UAG and UAA. In Kocuria rhizophila (strain ATCC 9341 / DSM 348 / NBRC 103217 / DC2201), this protein is Peptide chain release factor 1.